The primary structure comprises 149 residues: Calmodulin (149 aa).

Ala-2 is modified (N-acetylalanine). EF-hand domains lie at 8–43, 44–79, 81–116, and 117–149; these read EQIA…LGQN, PTEA…KMKD, DSEE…LGEK, and LTDE…MMAK. Residues Asp-21, Asp-23, Asp-25, Cys-27, Glu-32, Asp-57, Asp-59, Asn-61, Thr-63, Glu-68, Asp-94, Asp-96, Asn-98, and Glu-105 each coordinate Ca(2+). Lys-116 bears the N6,N6,N6-trimethyllysine mark. 5 residues coordinate Ca(2+): Asp-130, Asp-132, Asp-134, Gln-136, and Glu-141.

It belongs to the calmodulin family. The N-terminus is blocked.

In terms of biological role, calmodulin mediates the control of a large number of enzymes, ion channels and other proteins by Ca(2+). Among the enzymes to be stimulated by the calmodulin-Ca(2+) complex are a number of protein kinases and phosphatases. The chain is Calmodulin from Spinacia oleracea (Spinach).